The chain runs to 121 residues: Large ribosomal subunit protein bL12 (121 aa).

The protein belongs to the bacterial ribosomal protein bL12 family. As to quaternary structure, homodimer. Part of the ribosomal stalk of the 50S ribosomal subunit. Forms a multimeric L10(L12)X complex, where L10 forms an elongated spine to which 2 to 4 L12 dimers bind in a sequential fashion. Binds GTP-bound translation factors.

In terms of biological role, forms part of the ribosomal stalk which helps the ribosome interact with GTP-bound translation factors. Is thus essential for accurate translation. This chain is Large ribosomal subunit protein bL12, found in Mesomycoplasma hyopneumoniae (strain 232) (Mycoplasma hyopneumoniae).